Consider the following 90-residue polypeptide: Defensin-like protein 178 (90 aa).

The first 23 residues, 1-23, serve as a signal peptide directing secretion; sequence MAKATSSLVVPIIFLVIFALVEQ. Disulfide bonds link C27–C66, C36–C55, C39–C60, and C43–C62.

The protein belongs to the DEFL family.

It localises to the secreted. This chain is Defensin-like protein 178 (LCR64), found in Arabidopsis thaliana (Mouse-ear cress).